Consider the following 291-residue polypeptide: Pyridoxal 5'-phosphate synthase subunit PdxS (291 aa).

Aspartate 23 contacts D-ribose 5-phosphate. Lysine 80 acts as the Schiff-base intermediate with D-ribose 5-phosphate in catalysis. Glycine 152 is a binding site for D-ribose 5-phosphate. D-glyceraldehyde 3-phosphate is bound at residue arginine 164. Residues glycine 213 and 234–235 contribute to the D-ribose 5-phosphate site; that span reads GS.

It belongs to the PdxS/SNZ family. In the presence of PdxT, forms a dodecamer of heterodimers.

The enzyme catalyses aldehydo-D-ribose 5-phosphate + D-glyceraldehyde 3-phosphate + L-glutamine = pyridoxal 5'-phosphate + L-glutamate + phosphate + 3 H2O + H(+). It functions in the pathway cofactor biosynthesis; pyridoxal 5'-phosphate biosynthesis. Functionally, catalyzes the formation of pyridoxal 5'-phosphate from ribose 5-phosphate (RBP), glyceraldehyde 3-phosphate (G3P) and ammonia. The ammonia is provided by the PdxT subunit. Can also use ribulose 5-phosphate and dihydroxyacetone phosphate as substrates, resulting from enzyme-catalyzed isomerization of RBP and G3P, respectively. The sequence is that of Pyridoxal 5'-phosphate synthase subunit PdxS from Bifidobacterium adolescentis (strain ATCC 15703 / DSM 20083 / NCTC 11814 / E194a).